The primary structure comprises 26 residues: Dermaseptin-J4 (26 aa).

V26 is modified (valine amide).

As to expression, expressed by the skin glands.

The protein localises to the secreted. Functionally, has antimicrobial activity. The chain is Dermaseptin-J4 from Phasmahyla jandaia (Jandaia leaf frog).